The primary structure comprises 73 residues: Putative antimicrobial peptide clone 5 (73 aa).

Positions 1–22 (MQIKHLITLFFLVLIGADQCSA) are cleaved as a signal peptide. The propeptide occupies 45–73 (EVSPQIDQYRNFQKREAELEELLDRLPMY).

The protein belongs to the non-disulfide-bridged peptide (NDBP) superfamily. Short antimicrobial peptide (group 4) family. In terms of tissue distribution, expressed by the venom gland.

The protein resides in the secreted. Its function is as follows. Antibacterial peptide. This is Putative antimicrobial peptide clone 5 from Tityus costatus (Brazilian scorpion).